We begin with the raw amino-acid sequence, 297 residues long: Nucleotide-binding protein Bxeno_A0336 (297 aa).

ATP is bound at residue 8-15 (GISGSGKS). 57–60 (DARS) contacts GTP.

The protein belongs to the RapZ-like family.

In terms of biological role, displays ATPase and GTPase activities. The sequence is that of Nucleotide-binding protein Bxeno_A0336 from Paraburkholderia xenovorans (strain LB400).